Reading from the N-terminus, the 161-residue chain is Fatty acid-binding protein homolog 2 (161 aa).

The signal sequence occupies residues 1-19 (MSSKFLILLAFCGATLVAA).

The protein belongs to the calycin superfamily. Fatty-acid binding protein (FABP) family.

It is found in the secreted. May play a role in sequestering potentially toxic fatty acids and their peroxidation products, or it may be involved in the maintenance of the impermeable lipid layer of the eggshell. The polypeptide is Fatty acid-binding protein homolog 2 (lbp-2) (Caenorhabditis elegans).